A 340-amino-acid chain; its full sequence is tRNA-cytidine(32) 2-sulfurtransferase (340 aa).

Positions 74–79 match the PP-loop motif motif; sequence SGGKDS. The [4Fe-4S] cluster site is built by C149, C152, and C240.

Belongs to the TtcA family. In terms of assembly, homodimer. It depends on Mg(2+) as a cofactor. The cofactor is [4Fe-4S] cluster.

It is found in the cytoplasm. The catalysed reaction is cytidine(32) in tRNA + S-sulfanyl-L-cysteinyl-[cysteine desulfurase] + AH2 + ATP = 2-thiocytidine(32) in tRNA + L-cysteinyl-[cysteine desulfurase] + A + AMP + diphosphate + H(+). It participates in tRNA modification. In terms of biological role, catalyzes the ATP-dependent 2-thiolation of cytidine in position 32 of tRNA, to form 2-thiocytidine (s(2)C32). The sulfur atoms are provided by the cysteine/cysteine desulfurase (IscS) system. In Burkholderia ambifaria (strain MC40-6), this protein is tRNA-cytidine(32) 2-sulfurtransferase.